An 83-amino-acid chain; its full sequence is Cytochrome c oxidase subunit 7A2, mitochondrial (83 aa).

A mitochondrion-targeting transit peptide spans 1-23 (MLRNLLALRQIAKRTISTSSRRQ). Over 24–48 (FENKVPEKQKLFQEDNGIPVHLKGG) the chain is Mitochondrial matrix. K33 is subject to N6-acetyllysine. A helical membrane pass occupies residues 49 to 77 (IADALLYRATLILTVGGTAYAMYELAVAS). At 78–83 (FPKKQD) the chain is on the mitochondrial intermembrane side.

The protein belongs to the cytochrome c oxidase VIIa family. As to quaternary structure, component of the cytochrome c oxidase (complex IV, CIV), a multisubunit enzyme composed of 14 subunits. The complex is composed of a catalytic core of 3 subunits MT-CO1, MT-CO2 and MT-CO3, encoded in the mitochondrial DNA, and 11 supernumerary subunits COX4I1 (or COX4I2), COX5A, COX5B, COX6A2 (or COX6A1), COX6B1 (or COX6B2), COX6C, COX7A1 (or COX7A2), COX7B, COX7C, COX8B and NDUFA4, which are encoded in the nuclear genome. The complex exists as a monomer or a dimer and forms supercomplexes (SCs) in the inner mitochondrial membrane with NADH-ubiquinone oxidoreductase (complex I, CI) and ubiquinol-cytochrome c oxidoreductase (cytochrome b-c1 complex, complex III, CIII), resulting in different assemblies (supercomplex SCI(1)III(2)IV(1) and megacomplex MCI(2)III(2)IV(2)). Interacts with PET100.

It localises to the mitochondrion inner membrane. It functions in the pathway energy metabolism; oxidative phosphorylation. Its function is as follows. Component of the cytochrome c oxidase, the last enzyme in the mitochondrial electron transport chain which drives oxidative phosphorylation. The respiratory chain contains 3 multisubunit complexes succinate dehydrogenase (complex II, CII), ubiquinol-cytochrome c oxidoreductase (cytochrome b-c1 complex, complex III, CIII) and cytochrome c oxidase (complex IV, CIV), that cooperate to transfer electrons derived from NADH and succinate to molecular oxygen, creating an electrochemical gradient over the inner membrane that drives transmembrane transport and the ATP synthase. Cytochrome c oxidase is the component of the respiratory chain that catalyzes the reduction of oxygen to water. Electrons originating from reduced cytochrome c in the intermembrane space (IMS) are transferred via the dinuclear copper A center (CU(A)) of subunit 2 and heme A of subunit 1 to the active site in subunit 1, a binuclear center (BNC) formed by heme A3 and copper B (CU(B)). The BNC reduces molecular oxygen to 2 water molecules using 4 electrons from cytochrome c in the IMS and 4 protons from the mitochondrial matrix. The protein is Cytochrome c oxidase subunit 7A2, mitochondrial (COX7A2) of Bos taurus (Bovine).